The sequence spans 591 residues: Aspartate--tRNA ligase (591 aa).

Glu-174 lines the L-aspartate pocket. The tract at residues 198–201 (QLFK) is aspartate. Arg-220 provides a ligand contact to L-aspartate. ATP is bound by residues 220–222 (RDE) and Gln-229. Position 450 (His-450) interacts with L-aspartate. Residue Glu-486 participates in ATP binding. Arg-493 contributes to the L-aspartate binding site. 538–541 (GLDR) provides a ligand contact to ATP.

It belongs to the class-II aminoacyl-tRNA synthetase family. Type 1 subfamily. Homodimer.

It localises to the cytoplasm. The catalysed reaction is tRNA(Asp) + L-aspartate + ATP = L-aspartyl-tRNA(Asp) + AMP + diphosphate. Functionally, catalyzes the attachment of L-aspartate to tRNA(Asp) in a two-step reaction: L-aspartate is first activated by ATP to form Asp-AMP and then transferred to the acceptor end of tRNA(Asp). The protein is Aspartate--tRNA ligase of Leuconostoc mesenteroides subsp. mesenteroides (strain ATCC 8293 / DSM 20343 / BCRC 11652 / CCM 1803 / JCM 6124 / NCDO 523 / NBRC 100496 / NCIMB 8023 / NCTC 12954 / NRRL B-1118 / 37Y).